The sequence spans 49 residues: Osteocalcin (49 aa).

The region spanning 1 to 47 (YLDHWLGAPAPYPDPLEPRREVCELNPDCDELADHIGFQEAYRRFYG) is the Gla domain. Position 9 is a hydroxyproline (Pro9). 4 residues coordinate Ca(2+): Glu17, Glu21, Glu24, and Asp30. Residues Glu17, Glu21, and Glu24 each carry the 4-carboxyglutamate modification. Residues Cys23 and Cys29 are joined by a disulfide bond.

Belongs to the osteocalcin/matrix Gla protein family. Gamma-carboxyglutamate residues are formed by vitamin K dependent carboxylation by GGCX. These residues are essential for the binding of calcium. Decarboxylation promotes the hormone activity.

The protein resides in the secreted. Functionally, the carboxylated form is one of the main organic components of the bone matrix, which constitutes 1-2% of the total bone protein. It acts as a negative regulator of bone formation and is required to limit bone formation without impairing bone resorption or mineralization. The carboxylated form binds strongly to apatite and calcium. The uncarboxylated form acts as a hormone secreted by osteoblasts, which regulates different cellular processes, such as energy metabolism, male fertility and brain development. Regulates of energy metabolism by acting as a hormone favoring pancreatic beta-cell proliferation, insulin secretion and sensitivity and energy expenditure. Uncarboxylated osteocalcin hormone also promotes testosterone production in the testes: acts as a ligand for G protein-coupled receptor GPRC6A at the surface of Leydig cells, initiating a signaling response that promotes the expression of enzymes required for testosterone synthesis in a CREB-dependent manner. Also acts as a regulator of brain development: osteocalcin hormone crosses the blood-brain barrier and acts as a ligand for GPR158 on neurons, initiating a signaling response that prevents neuronal apoptosis in the hippocampus, favors the synthesis of all monoamine neurotransmitters and inhibits that of gamma-aminobutyric acid (GABA). Osteocalcin also crosses the placenta during pregnancy and maternal osteocalcin is required for fetal brain development. This Equus caballus (Horse) protein is Osteocalcin (BGLAP).